A 449-amino-acid chain; its full sequence is MYHLWIKCLAAWIFLKRFNGVHVMQAKAPMYPNEPFLVFWNAPTTQCRLRYKVDLDLNTFHIVTNANDSLSGSAVTIFYPTHLGFYPHIDGRGHFFNGIIPQNESLAKHLNKSKSDINRMIPLRTFHGLGVIDWENWRPQWDRNWGSKNVYRNRSIQFARDLHPELSEDEIKRLAKQEYEKAAKSFMRDTLLLAEEMRPYGYWGYYLYPDCQNYNYKTKPDQYTGECPDIEITRNNQLLWLWRDSTALFPNIYLETVLRSSDNALKFVHHRLKESMRIASMARKDYALPVFPYARPFYAYTFEPLTEEDLVNTVGETAAMGAAGIVFWGSMQYASTVDSCRKVKDYIDGPLGRYIVNVTTAAKICSHFLCKKHGRCVRKHSDSNAFLHLFPDSFRILVHGNATEKKVIVKGKLELENLIFLINNFMCQCYQGWKGLYCEKHSIKDIRKI.

The first 23 residues, 1–23 (MYHLWIKCLAAWIFLKRFNGVHV), serve as a signal peptide directing secretion. 2 disulfides stabilise this stretch: Cys47-Cys340 and Cys211-Cys227. N-linked (GlcNAc...) asparagine glycosylation is found at Asn67, Asn103, and Asn111. The active-site Proton donor is Glu135. N-linked (GlcNAc...) asparagine glycosylation occurs at Asn153. An N-linked (GlcNAc...) asparagine glycan is attached at Asn357. Disulfide bonds link Cys365/Cys376, Cys370/Cys427, and Cys429/Cys438. Asn401 carries an N-linked (GlcNAc...) asparagine glycan. The 12-residue stretch at 427–438 (CQCYQGWKGLYC) folds into the EGF-like domain.

This sequence belongs to the glycosyl hydrolase 56 family. Monomer. In terms of tissue distribution, expressed by the venom gland.

The protein resides in the secreted. The enzyme catalyses Random hydrolysis of (1-&gt;4)-linkages between N-acetyl-beta-D-glucosamine and D-glucuronate residues in hyaluronate.. Snake venom endo-hyaluronidase that degrades hyaluronan to smaller oligosaccharide fragments. In venom, it is not toxic by itself, but increases the diffusion of other venom proteins by degrading the extracellular matrix. In addition, it displays antiedematogenic activity. The polypeptide is Hyaluronidase (Crotalus adamanteus (Eastern diamondback rattlesnake)).